Reading from the N-terminus, the 523-residue chain is Galactarate dehydratase (L-threo-forming) (523 aa).

This sequence belongs to the UxaA family. In terms of assembly, homodimer. It depends on Fe(2+) as a cofactor.

It catalyses the reaction galactarate = 5-dehydro-4-deoxy-D-glucarate + H2O. Its pathway is carbohydrate acid metabolism; galactarate degradation; D-glycerate from galactarate: step 1/3. In terms of biological role, catalyzes the dehydration of galactarate to form 5-dehydro-4-deoxy-D-glucarate (5-KDG). This is Galactarate dehydratase (L-threo-forming) from Escherichia coli (strain K12).